A 393-amino-acid chain; its full sequence is SEC12-like protein 2 (393 aa).

Position 2 is an N-acetylalanine (Ala-2). Residues 2 to 367 (ANQSTETNQP…EQKGDKPGVR (366 aa)) lie on the Cytoplasmic side of the membrane. The interval 41–67 (EKSEDDDESSSSSSSSRSCIVLSGGGG) is disordered. Phosphoserine is present on Ser-43. 4 WD repeats span residues 151 to 190 (RDVG…TLLN), 193 to 231 (QAHS…AVAS), 283 to 322 (IKKN…TIQV), and 326 to 367 (AHLG…PGVR). Residues 368 to 388 (WWLLVLLIVLLYVVAYYYMKA) form a helical; Signal-anchor for type II membrane protein membrane-spanning segment. At 389 to 393 (KGIIP) the chain is on the lumenal side.

In terms of assembly, interacts with BZIP28.

The protein localises to the endoplasmic reticulum membrane. The protein resides in the golgi apparatus. It localises to the cis-Golgi network membrane. In terms of biological role, required for the formation or budding of transport vesicles from the ER. This is SEC12-like protein 2 (STL2P) from Arabidopsis thaliana (Mouse-ear cress).